Consider the following 119-residue polypeptide: Holo-[acyl-carrier-protein] synthase (119 aa).

Residues aspartate 8 and glutamate 58 each coordinate Mg(2+).

It belongs to the P-Pant transferase superfamily. AcpS family. Requires Mg(2+) as cofactor.

The protein resides in the cytoplasm. The catalysed reaction is apo-[ACP] + CoA = holo-[ACP] + adenosine 3',5'-bisphosphate + H(+). Its function is as follows. Transfers the 4'-phosphopantetheine moiety from coenzyme A to a Ser of acyl-carrier-protein. The sequence is that of Holo-[acyl-carrier-protein] synthase from Geobacillus sp. (strain WCH70).